The sequence spans 812 residues: DNA translocase FtsK 1 (812 aa).

The segment covering 1-11 (MTEKSHKKTAK) has biased composition (basic residues). The tract at residues 1 to 36 (MTEKSHKKTAKGRAGSPSPTSARNKKADNGARGNKV) is disordered. A compositionally biased stretch (basic and acidic residues) spans 25 to 36 (KKADNGARGNKV). 5 helical membrane passes run 63–83 (IGDA…ISLI), 116–136 (VGYY…CVVL), 156–176 (IAAA…YFVL), 184–204 (LPVG…AWLL), and 210–230 (LLII…ISWL). The Cytoplasmic portion of the chain corresponds to 231-812 (EFLNGAGRAV…RKILAHKDHL (582 aa)). The FtsK domain occupies 461 to 670 (GTPVVGDLAK…FTVQSKIDSR (210 aa)). Residue 481 to 486 (GSGKSV) coordinates ATP.

The protein belongs to the FtsK/SpoIIIE/SftA family. Homohexamer. Forms a ring that surrounds DNA.

It localises to the cell inner membrane. In terms of biological role, essential cell division protein that coordinates cell division and chromosome segregation. The N-terminus is involved in assembly of the cell-division machinery. The C-terminus functions as a DNA motor that moves dsDNA in an ATP-dependent manner towards the dif recombination site, which is located within the replication terminus region. Translocation stops specifically at Xer-dif sites, where FtsK interacts with the Xer recombinase, allowing activation of chromosome unlinking by recombination. FtsK orienting polar sequences (KOPS) guide the direction of DNA translocation. FtsK can remove proteins from DNA as it translocates, but translocation stops specifically at XerCD-dif site, thereby preventing removal of XerC and XerD from dif. The sequence is that of DNA translocase FtsK 1 (ftsK1) from Neisseria meningitidis serogroup B (strain ATCC BAA-335 / MC58).